Here is a 271-residue protein sequence, read N- to C-terminus: Shikimate dehydrogenase (NADP(+)) (271 aa).

Residues 14-16 (SLS) and threonine 61 contribute to the shikimate site. Lysine 65 (proton acceptor) is an active-site residue. Shikimate contacts are provided by asparagine 86 and aspartate 101. NADP(+)-binding positions include 125 to 129 (GAGGA) and isoleucine 212. Tyrosine 214 lines the shikimate pocket. Position 235 (glycine 235) interacts with NADP(+).

It belongs to the shikimate dehydrogenase family. In terms of assembly, homodimer.

It carries out the reaction shikimate + NADP(+) = 3-dehydroshikimate + NADPH + H(+). It functions in the pathway metabolic intermediate biosynthesis; chorismate biosynthesis; chorismate from D-erythrose 4-phosphate and phosphoenolpyruvate: step 4/7. In terms of biological role, involved in the biosynthesis of the chorismate, which leads to the biosynthesis of aromatic amino acids. Catalyzes the reversible NADPH linked reduction of 3-dehydroshikimate (DHSA) to yield shikimate (SA). This Clostridium perfringens (strain ATCC 13124 / DSM 756 / JCM 1290 / NCIMB 6125 / NCTC 8237 / Type A) protein is Shikimate dehydrogenase (NADP(+)).